We begin with the raw amino-acid sequence, 953 residues long: TPR repeat-containing protein ZIP4 (953 aa).

The stretch at 129-162 (ASFFHRSGLAWLDLGRVDLASACFEKATPLVSAA) is one TPR 1 repeat. Positions 248-269 (AASPSSSSPRTPPYGGATPKTP) are disordered. TPR repeat units follow at residues 432 to 465 (HALL…VSRD) and 473 to 506 (ADCF…EPNI). The disordered stretch occupies residues 925–953 (VSGDEPDECSQEEAPKASISGSMSQPVLV). A compositionally biased stretch (polar residues) spans 943–953 (ISGSMSQPVLV).

As to quaternary structure, interacts with HEI10 and SHOC1.

It localises to the nucleus. The protein localises to the chromosome. Its function is as follows. Required for crossover formation, complete synapsis of homologous chromosomes and bivalent formation during meiosis. Is specific to recombination events resulting in interference-sensitive crossovers (class I meiotic crossover) and works cooperatively with MER3 to promote crossovers. In Oryza sativa subsp. japonica (Rice), this protein is TPR repeat-containing protein ZIP4.